A 163-amino-acid polypeptide reads, in one-letter code: Large ribosomal subunit protein bL17 (163 aa).

Residues 127-163 (KEVKKAKSRRGGKAKKAEGTAPEAPAAESESTTEASE) form a disordered region. Positions 128-140 (EVKKAKSRRGGKA) are enriched in basic residues. Low complexity predominate over residues 145–163 (GTAPEAPAAESESTTEASE).

This sequence belongs to the bacterial ribosomal protein bL17 family. In terms of assembly, part of the 50S ribosomal subunit. Contacts protein L32.

The chain is Large ribosomal subunit protein bL17 from Flavobacterium johnsoniae (strain ATCC 17061 / DSM 2064 / JCM 8514 / BCRC 14874 / CCUG 350202 / NBRC 14942 / NCIMB 11054 / UW101) (Cytophaga johnsonae).